The primary structure comprises 101 residues: MSHLRIAVIFLCTLFALTAGAEESCQVGGLTIPVGKTQQDRCTLYECTMESNRVVLKSMICAEQSLRRGCKRVPAQATAPFPDCCPTTLCRGRQWDRPRTL.

A signal peptide spans 1–20 (MSHLRIAVIFLCTLFALTAG).

Belongs to the scorpion La1-like peptide family. Contains 4 disulfide bonds. As to expression, expressed by the venom gland.

It is found in the secreted. The protein is Venom peptide Pc of Pandinus cavimanus (Tanzanian red clawed scorpion).